The primary structure comprises 225 residues: Ribonuclease 3 (225 aa).

The RNase III domain maps to 7–129 (IPRLCRTLGY…IIGAVYLDSD (123 aa)). Position 42 (Glu-42) interacts with Mg(2+). Asp-46 is a catalytic residue. Mg(2+) contacts are provided by Asp-115 and Glu-118. Glu-118 is an active-site residue. A DRBM domain is found at 155 to 225 (DPKTLLQELL…AAQALELIKR (71 aa)).

This sequence belongs to the ribonuclease III family. As to quaternary structure, homodimer. It depends on Mg(2+) as a cofactor.

The protein localises to the cytoplasm. The enzyme catalyses Endonucleolytic cleavage to 5'-phosphomonoester.. Its function is as follows. Digests double-stranded RNA. Involved in the processing of primary rRNA transcript to yield the immediate precursors to the large and small rRNAs (23S and 16S). Processes some mRNAs, and tRNAs when they are encoded in the rRNA operon. Processes pre-crRNA and tracrRNA of type II CRISPR loci if present in the organism. The chain is Ribonuclease 3 from Shewanella woodyi (strain ATCC 51908 / MS32).